The primary structure comprises 565 residues: Ubiquitin carboxyl-terminal hydrolase 39 (565 aa).

Composition is skewed to basic and acidic residues over residues M1–S21 and V28–E39. 2 disordered regions span residues M1–E61 and E75–V95. The residue at position 46 (S46) is a Phosphoserine. K51 is covalently cross-linked (Glycyl lysine isopeptide (Lys-Gly) (interchain with G-Cter in SUMO2)). S82 is modified (phosphoserine). The span at E85–V95 shows a compositional bias: basic and acidic residues. A UBP-type; degenerate zinc finger spans residues R103 to Q200. Zn(2+) is bound by residues C136, C139, H155, and H161. Residues V225–R555 form the USP domain.

The protein belongs to the peptidase C19 family. The U4/U6-U5 tri-snRNP complex is a building block of the precatalytic spliceosome (spliceosome B complex). Component of the U4/U6-U5 tri-snRNP complex composed of the U4, U6 and U5 snRNAs and at least PRPF3, PRPF4, PRPF6, PRPF8, PRPF31, SNRNP200, TXNL4A, SNRNP40, SNRPB, SNRPD1, SNRPD2, SNRPD3, SNRPE, SNRPF, SNRPG, DDX23, CD2BP2, PPIH, SNU13, EFTUD2, SART1 and USP39, plus LSM2, LSM3, LSM4, LSM5, LSM6, LSM7 and LSM8.

It localises to the nucleus. The enzyme catalyses Thiol-dependent hydrolysis of ester, thioester, amide, peptide and isopeptide bonds formed by the C-terminal Gly of ubiquitin (a 76-residue protein attached to proteins as an intracellular targeting signal).. Functionally, deubiquitinating enzyme that plays a role in many cellular processes including cellular antiviral response, epithelial morphogenesis, DNA repair or B-cell development. Plays a role in pre-mRNA splicing as a component of the U4/U6-U5 tri-snRNP, one of the building blocks of the precatalytic spliceosome. Specifically regulates immunoglobulin gene rearrangement in a spliceosome-dependent manner, which involves modulating chromatin interactions at the Igh locus and therefore plays an essential role in B-cell development. Regulates AURKB mRNA levels, and thereby plays a role in cytokinesis and in the spindle checkpoint. Regulates apoptosis and G2/M cell cycle checkpoint in response to DNA damage by deubiquitinating and stabilizing CHK2. Also plays an important role in DNA repair by controlling the recruitment of XRCC4/LIG4 to DNA double-strand breaks for non-homologous end-joining repair. Participates in antiviral activity by affecting the type I IFN signaling by stabilizing STAT1 and decreasing its 'Lys-6'-linked ubiquitination. Contributes to non-canonical Wnt signaling during epidermal differentiation. Acts as a negative regulator NF-kappa-B activation through deubiquitination of 'Lys-48'-linked ubiquitination of NFKBIA. This Homo sapiens (Human) protein is Ubiquitin carboxyl-terminal hydrolase 39.